Reading from the N-terminus, the 295-residue chain is 2-dehydropantoate 2-reductase (295 aa).

NADP(+) contacts are provided by residues 9-14 (GPGAVG), N100, and A126. N100 provides a ligand contact to substrate. K177 functions as the Proton donor in the catalytic mechanism. N181 and S246 together coordinate substrate. E258 contacts NADP(+).

This sequence belongs to the ketopantoate reductase family.

Its subcellular location is the cytoplasm. The catalysed reaction is (R)-pantoate + NADP(+) = 2-dehydropantoate + NADPH + H(+). Its pathway is cofactor biosynthesis; (R)-pantothenate biosynthesis; (R)-pantoate from 3-methyl-2-oxobutanoate: step 2/2. Its function is as follows. Catalyzes the NADPH-dependent reduction of ketopantoate into pantoic acid. This chain is 2-dehydropantoate 2-reductase, found in Mycobacterium tuberculosis (strain CDC 1551 / Oshkosh).